Here is a 93-residue protein sequence, read N- to C-terminus: Pyrimidine/purine nucleoside phosphorylase (93 aa).

Belongs to the nucleoside phosphorylase PpnP family.

It catalyses the reaction a purine D-ribonucleoside + phosphate = a purine nucleobase + alpha-D-ribose 1-phosphate. It carries out the reaction adenosine + phosphate = alpha-D-ribose 1-phosphate + adenine. The enzyme catalyses cytidine + phosphate = cytosine + alpha-D-ribose 1-phosphate. The catalysed reaction is guanosine + phosphate = alpha-D-ribose 1-phosphate + guanine. It catalyses the reaction inosine + phosphate = alpha-D-ribose 1-phosphate + hypoxanthine. It carries out the reaction thymidine + phosphate = 2-deoxy-alpha-D-ribose 1-phosphate + thymine. The enzyme catalyses uridine + phosphate = alpha-D-ribose 1-phosphate + uracil. The catalysed reaction is xanthosine + phosphate = alpha-D-ribose 1-phosphate + xanthine. Functionally, catalyzes the phosphorolysis of diverse nucleosides, yielding D-ribose 1-phosphate and the respective free bases. Can use uridine, adenosine, guanosine, cytidine, thymidine, inosine and xanthosine as substrates. Also catalyzes the reverse reactions. In Marinobacter nauticus (strain ATCC 700491 / DSM 11845 / VT8) (Marinobacter aquaeolei), this protein is Pyrimidine/purine nucleoside phosphorylase.